Here is a 258-residue protein sequence, read N- to C-terminus: Imidazole glycerol phosphate synthase subunit HisF (258 aa).

Catalysis depends on residues aspartate 11 and aspartate 130.

The protein belongs to the HisA/HisF family. As to quaternary structure, heterodimer of HisH and HisF.

It localises to the cytoplasm. The catalysed reaction is 5-[(5-phospho-1-deoxy-D-ribulos-1-ylimino)methylamino]-1-(5-phospho-beta-D-ribosyl)imidazole-4-carboxamide + L-glutamine = D-erythro-1-(imidazol-4-yl)glycerol 3-phosphate + 5-amino-1-(5-phospho-beta-D-ribosyl)imidazole-4-carboxamide + L-glutamate + H(+). Its pathway is amino-acid biosynthesis; L-histidine biosynthesis; L-histidine from 5-phospho-alpha-D-ribose 1-diphosphate: step 5/9. IGPS catalyzes the conversion of PRFAR and glutamine to IGP, AICAR and glutamate. The HisF subunit catalyzes the cyclization activity that produces IGP and AICAR from PRFAR using the ammonia provided by the HisH subunit. This chain is Imidazole glycerol phosphate synthase subunit HisF, found in Escherichia coli (strain ATCC 8739 / DSM 1576 / NBRC 3972 / NCIMB 8545 / WDCM 00012 / Crooks).